The sequence spans 446 residues: Tol-Pal system protein TolB (446 aa).

The N-terminal stretch at 1 to 36 (MMDVQTVRRGNAVQSLMSKLILPLVMAVAFALPARA) is a signal peptide. The tract at residues 424-446 (GYNERPSPTPTFASDPAWSPRIQ) is disordered.

The protein belongs to the TolB family. In terms of assembly, the Tol-Pal system is composed of five core proteins: the inner membrane proteins TolA, TolQ and TolR, the periplasmic protein TolB and the outer membrane protein Pal. They form a network linking the inner and outer membranes and the peptidoglycan layer.

It localises to the periplasm. Functionally, part of the Tol-Pal system, which plays a role in outer membrane invagination during cell division and is important for maintaining outer membrane integrity. The polypeptide is Tol-Pal system protein TolB (Parvibaculum lavamentivorans (strain DS-1 / DSM 13023 / NCIMB 13966)).